The primary structure comprises 134 residues: Cytochrome b5 (134 aa).

One can recognise a Cytochrome b5 heme-binding domain in the interval 5 to 81; that stretch reads KKVLGFEEVS…MEKYYIGEID (77 aa). His40 and His64 together coordinate heme. Residues 107-127 traverse the membrane as a helical segment; the sequence is FMIKILQFLVPILILGLALVV.

Belongs to the cytochrome b5 family.

It localises to the endoplasmic reticulum membrane. The protein resides in the microsome membrane. In terms of biological role, membrane bound hemoprotein which function as an electron carrier for several membrane bound oxygenases. This Brassica oleracea var. botrytis (Cauliflower) protein is Cytochrome b5 (CYB5).